Consider the following 460-residue polypeptide: 4-O-methyl-glucuronoyl methylesterase (460 aa).

A signal peptide spans 1 to 17 (MASRFFALLLLAIPIQA). Pyrrolidone carboxylic acid is present on Q18. In terms of domain architecture, CBM1 spans 18–53 (QSPVWGQCGGIGWSGPTTCVGGATCVSYNPYYSQCI). Cystine bridges form between C96–C131, C277–C412, and C309–C384. Residues 276-281 (GCSRNG) carry the GXSYXG catalytic site motif motif. S278 functions as the Nucleophile in the catalytic mechanism. Residues K282, Q324, E332, and W375 each contribute to the substrate site. H411 serves as the catalytic Proton donor/acceptor. A glycan (N-linked (GlcNAc...) asparagine) is linked at N447.

It belongs to the carbohydrate esterase 15 (CE15) family.

It is found in the secreted. It catalyses the reaction a 4-O-methyl-alpha-D-glucuronosyl ester derivative + H2O = 4-O-methyl-alpha-D-glucuronate derivative + an alcohol + H(+). Glucuronoyl esterase which may play a significant role in biomass degradation, as it is considered to disconnect hemicellulose from lignin through the hydrolysis of the ester bond between 4-O-methyl-D-glucuronic acid residues of glucuronoxylans and aromatic alcohols of lignin. Does not hydrolyze substrates of other carbohydrate esterases such as acetylxylan esterase, acetyl esterase and feruloyl esterase. In Hypocrea jecorina (strain QM6a) (Trichoderma reesei), this protein is 4-O-methyl-glucuronoyl methylesterase.